The following is a 507-amino-acid chain: Anthranilate synthase component 1 (507 aa).

Serine 65 is an L-tryptophan binding site. Position 81 is a phosphoserine (serine 81). Threonine 223 bears the Phosphothreonine mark. Residue 280 to 282 participates in L-tryptophan binding; it reads PYL. A chorismate-binding site is contributed by 316–317; sequence GT. Glutamate 343 provides a ligand contact to Mg(2+). Chorismate is bound by residues tyrosine 431, arginine 452, 466 to 468, and glycine 468; that span reads GGG. Glutamate 481 provides a ligand contact to Mg(2+).

The protein belongs to the anthranilate synthase component I family. As to quaternary structure, tetramer of two components I and two components II. Mg(2+) serves as cofactor.

The catalysed reaction is chorismate + L-glutamine = anthranilate + pyruvate + L-glutamate + H(+). The protein operates within amino-acid biosynthesis; L-tryptophan biosynthesis; L-tryptophan from chorismate: step 1/5. This is Anthranilate synthase component 1 (TRP2) from Saccharomyces cerevisiae (strain ATCC 204508 / S288c) (Baker's yeast).